The following is a 203-amino-acid chain: Probable cytochrome c oxidase subunit 3 (203 aa).

Transmembrane regions (helical) follow at residues 30–50 (IIWLSSELMFFAGLFAMYFVA), 69–89 (LAVPVTAVLVASSFTCQMGVF), 102–122 (WYFITLLMGAFFVAGQGYEYY), 142–162 (ITTGFHGLHVIGGLIAFVFLL), and 179–199 (IVVSYYWHFVDIVWIGLFATI).

The protein belongs to the cytochrome c oxidase subunit 3 family.

The protein localises to the cell membrane. The enzyme catalyses 4 Fe(II)-[cytochrome c] + O2 + 8 H(+)(in) = 4 Fe(III)-[cytochrome c] + 2 H2O + 4 H(+)(out). The sequence is that of Probable cytochrome c oxidase subunit 3 (ctaE) from Nocardia farcinica (strain IFM 10152).